Consider the following 549-residue polypeptide: GATA-type transcription factor sreA (549 aa).

Residues 40–100 (AQAGREHPQD…TSPKSQKDTS (61 aa)) are disordered. 2 stretches are compositionally biased toward basic and acidic residues: residues 43–72 (GREHPQDRHYTDNGSRKSEAGAPHSHHEGE) and 86–97 (HHVEKTSPKSQK). The GATA-type 1 zinc-finger motif lies at 106 to 130 (CSNCGTKSTPLWRRSPTGAMICNAC). Residues 141 to 174 (RPTKRNRTQASPEAYHPQNQSVGSQPDPAVTGSE) form a disordered region. The cystein-rich region (CRR) stretch occupies residues 180-198 (CPGGGNCNGTGGAEGCDGC). Residues 223 to 244 (GNSDAVPSPEAEAPARNSGQPE) form a disordered region. The segment at 251–275 (CQNCGTTVTPLWRRDENGHPICNAC) adopts a GATA-type 2 zinc-finger fold. Disordered stretches follow at residues 306-332 (RENSPTAATHSSHGSSASPEASSPATL), 375-459 (NSGA…RLSS), and 482-535 (LGRQ…MREQ). Positions 309 to 331 (SPTAATHSSHGSSASPEASSPAT) are enriched in low complexity. Pro residues predominate over residues 383-396 (HHPPPPRLLEPGHP). The segment covering 485–497 (QQQSQPHHPQSSP) has biased composition (low complexity). The segment covering 498–515 (LAPTQAASQSLPGVSNMD) has biased composition (polar residues). A coiled-coil region spans residues 511–549 (VSNMDNHVEDRRAKLQREAEEMREQLRAKERELAELAGQ). Residues 516–535 (NHVEDRRAKLQREAEEMREQ) show a composition bias toward basic and acidic residues.

It localises to the nucleus. In terms of biological role, GATA-type transcription repressor that regulates iron- acquisition genes through specific binding GATA sequence elements of target promoters. Iron acquisition regulation is critical for survival under both iron-limiting conditions (to acquire essential iron) and iron-replete conditions (to limit iron toxicity). SreA targets include genes encoding a number of key iron-regulated factors such as those involved in siderophore biosynthesis. The protein is GATA-type transcription factor sreA of Emericella nidulans (strain FGSC A4 / ATCC 38163 / CBS 112.46 / NRRL 194 / M139) (Aspergillus nidulans).